The primary structure comprises 435 residues: Fez family zinc finger protein 2 (435 aa).

The Engrailed homology 1 repressor motif lies at 27–42; that stretch reads SLAFSIERIMAKTSEP. 6 consecutive C2H2-type zinc fingers follow at residues 254 to 276, 282 to 304, 310 to 332, 338 to 360, 366 to 388, and 394 to 417; these read FTCE…MPVH, FVCK…KIIH, HKCN…IRIH, FVCE…KLTH, YKCT…MHTH, and FTCG…RKLH.

This sequence belongs to the krueppel C2H2-type zinc-finger protein family.

The protein localises to the nucleus. Transcription repressor. Component of the regulatory cascade that controls the development of dopaminergic (DA) and serotonergic (5HT) neurons. The protein is Fez family zinc finger protein 2 (fezf2) of Xenopus tropicalis (Western clawed frog).